Reading from the N-terminus, the 154-residue chain is Superoxide dismutase [Cu-Zn] (154 aa).

Positions 47, 49, and 64 each coordinate Cu cation. An intrachain disulfide couples Cys58 to Cys147. Zn(2+)-binding residues include His64, His72, His81, and Asp84. His121 is a binding site for Cu cation. Positions 126–137 are enriched in basic and acidic residues; the sequence is DLGRGGNEESKK. The disordered stretch occupies residues 126–147; that stretch reads DLGRGGNEESKKTGNAGPRPAC.

Belongs to the Cu-Zn superoxide dismutase family. Homodimer. It depends on Cu cation as a cofactor. Zn(2+) serves as cofactor.

It is found in the cytoplasm. It catalyses the reaction 2 superoxide + 2 H(+) = H2O2 + O2. Its function is as follows. Destroys radicals which are normally produced within the cells and which are toxic to biological systems. Plays an important role in the phase transition, and may be important in vivo, as it would facilitate the intracellular survival of the fungus by providing a non-toxic environment in the macrophage phagolysosomes. This is Superoxide dismutase [Cu-Zn] from Talaromyces marneffei (Penicillium marneffei).